Consider the following 147-residue polypeptide: Lysozyme C-3 (147 aa).

Residues 1–18 form the signal peptide; sequence MKALVILGLLFLSVAVQG. In terms of domain architecture, C-type lysozyme spans 19–147; the sequence is KVFERCELAR…VSSYVEGCKL (129 aa). 4 disulfides stabilise this stretch: C24/C145, C48/C133, C83/C99, and C95/C113. Catalysis depends on residues E53 and D71.

The protein belongs to the glycosyl hydrolase 22 family. As to quaternary structure, monomer. Expressed in stomach.

It is found in the secreted. It catalyses the reaction Hydrolysis of (1-&gt;4)-beta-linkages between N-acetylmuramic acid and N-acetyl-D-glucosamine residues in a peptidoglycan and between N-acetyl-D-glucosamine residues in chitodextrins.. Lysozymes have primarily a bacteriolytic function; those in tissues and body fluids are associated with the monocyte-macrophage system and enhance the activity of immunoagents. The chain is Lysozyme C-3 from Ovis aries (Sheep).